The sequence spans 307 residues: 4-hydroxythreonine-4-phosphate dehydrogenase (307 aa).

Substrate-binding residues include histidine 126 and threonine 127. Residues histidine 156, histidine 195, and histidine 251 each coordinate a divalent metal cation. The substrate site is built by lysine 259, asparagine 268, and arginine 277.

The protein belongs to the PdxA family. Homodimer. The cofactor is Zn(2+). Requires Mg(2+) as cofactor. It depends on Co(2+) as a cofactor.

Its subcellular location is the cytoplasm. It carries out the reaction 4-(phosphooxy)-L-threonine + NAD(+) = 3-amino-2-oxopropyl phosphate + CO2 + NADH. Its pathway is cofactor biosynthesis; pyridoxine 5'-phosphate biosynthesis; pyridoxine 5'-phosphate from D-erythrose 4-phosphate: step 4/5. Catalyzes the NAD(P)-dependent oxidation of 4-(phosphooxy)-L-threonine (HTP) into 2-amino-3-oxo-4-(phosphooxy)butyric acid which spontaneously decarboxylates to form 3-amino-2-oxopropyl phosphate (AHAP). The chain is 4-hydroxythreonine-4-phosphate dehydrogenase from Helicobacter pylori (strain J99 / ATCC 700824) (Campylobacter pylori J99).